Reading from the N-terminus, the 96-residue chain is Progonadoliberin-1 (96 aa).

Positions 1–26 (MHRKMAVKTLSVWLLLVGTLVPQHCC) are cleaved as a signal peptide. Gln27 is modified (pyrrolidone carboxylic acid). Gly36 carries the glycine amide modification.

This sequence belongs to the GnRH family. In terms of tissue distribution, preoptic area of the brain.

The protein localises to the secreted. Stimulates the secretion of gonadotropins. In Verasper moseri (Barfin flounder), this protein is Progonadoliberin-1 (gnrh1).